The primary structure comprises 600 residues: tRNA uridine 5-carboxymethylaminomethyl modification enzyme MnmG (600 aa).

An FAD-binding site is contributed by 10 to 15 (GGGHAG). The interval 216 to 239 (ADPQPRGFTGTPGPRAAESPTWQT) is disordered. 267 to 281 (GPRYCPSIEDKVVKF) is an NAD(+) binding site.

Belongs to the MnmG family. As to quaternary structure, homodimer. Heterotetramer of two MnmE and two MnmG subunits. It depends on FAD as a cofactor.

The protein resides in the cytoplasm. Its function is as follows. NAD-binding protein involved in the addition of a carboxymethylaminomethyl (cmnm) group at the wobble position (U34) of certain tRNAs, forming tRNA-cmnm(5)s(2)U34. This Deinococcus radiodurans (strain ATCC 13939 / DSM 20539 / JCM 16871 / CCUG 27074 / LMG 4051 / NBRC 15346 / NCIMB 9279 / VKM B-1422 / R1) protein is tRNA uridine 5-carboxymethylaminomethyl modification enzyme MnmG.